We begin with the raw amino-acid sequence, 76 residues long: Small proline-rich protein 2G (76 aa).

3 consecutive repeat copies span residues 21-29 (PKCPEPCPL), 30-38 (PKCPEPCPP), and 39-47 (PKCPEPCPE). Positions 21-47 (PKCPEPCPLPKCPEPCPPPKCPEPCPE) are 3 X 9 AA approximate tandem repeats. Residues 55–76 (QQKCPPVQTPPPCQQKCPPKSK) form a disordered region.

This sequence belongs to the cornifin (SPRR) family. Expressed in uterus.

The protein localises to the cytoplasm. Its function is as follows. Cross-linked envelope protein of keratinocytes. It is a keratinocyte protein that first appears in the cell cytosol, but ultimately becomes cross-linked to membrane proteins by transglutaminase. All that results in the formation of an insoluble envelope beneath the plasma membrane. This Mus musculus (Mouse) protein is Small proline-rich protein 2G (Sprr2g).